The chain runs to 337 residues: GTPase Obg (337 aa).

One can recognise an Obg domain in the interval 4 to 162 (SNFVDYAKIH…RQIVFQLKLL (159 aa)). The OBG-type G domain maps to 163–329 (ADVGLVGFPN…LKDLLWEKLR (167 aa)). Residues 169-176 (GFPNTGKS), 194-198 (FTTLE), 216-219 (DIPG), 283-286 (SKSD), and 310-312 (SSF) contribute to the GTP site. Positions 176 and 196 each coordinate Mg(2+).

This sequence belongs to the TRAFAC class OBG-HflX-like GTPase superfamily. OBG GTPase family. Monomer. Requires Mg(2+) as cofactor.

The protein resides in the cytoplasm. Its function is as follows. An essential GTPase which binds GTP, GDP and possibly (p)ppGpp with moderate affinity, with high nucleotide exchange rates and a fairly low GTP hydrolysis rate. Plays a role in control of the cell cycle, stress response, ribosome biogenesis and in those bacteria that undergo differentiation, in morphogenesis control. This Azobacteroides pseudotrichonymphae genomovar. CFP2 protein is GTPase Obg.